The chain runs to 425 residues: Enolase (425 aa).

Gln163 provides a ligand contact to (2R)-2-phosphoglycerate. Glu205 functions as the Proton donor in the catalytic mechanism. The Mg(2+) site is built by Asp242, Glu285, and Asp312. The (2R)-2-phosphoglycerate site is built by Lys337, Arg366, Ser367, and Lys388. The active-site Proton acceptor is the Lys337.

It belongs to the enolase family. Requires Mg(2+) as cofactor.

Its subcellular location is the cytoplasm. It localises to the secreted. It is found in the cell surface. The enzyme catalyses (2R)-2-phosphoglycerate = phosphoenolpyruvate + H2O. The protein operates within carbohydrate degradation; glycolysis; pyruvate from D-glyceraldehyde 3-phosphate: step 4/5. Catalyzes the reversible conversion of 2-phosphoglycerate (2-PG) into phosphoenolpyruvate (PEP). It is essential for the degradation of carbohydrates via glycolysis. This is Enolase from Rhodospirillum rubrum (strain ATCC 11170 / ATH 1.1.1 / DSM 467 / LMG 4362 / NCIMB 8255 / S1).